A 342-amino-acid polypeptide reads, in one-letter code: Ornithine carbamoyltransferase, catabolic (342 aa).

Carbamoyl phosphate is bound by residues 59-62 (STRT), S83, R110, and 137-140 (HPTQ). L-ornithine-binding positions include N169, D235, and 239–240 (SL). Carbamoyl phosphate-binding positions include 276–277 (CL) and R328.

The protein belongs to the aspartate/ornithine carbamoyltransferase superfamily. OTCase family. In terms of assembly, dodecamer (tetramer of trimers).

It is found in the cytoplasm. It carries out the reaction carbamoyl phosphate + L-ornithine = L-citrulline + phosphate + H(+). It participates in amino-acid degradation; L-arginine degradation via ADI pathway; carbamoyl phosphate from L-arginine: step 2/2. Its function is as follows. nvolved in the catabolism of arginine. Catalyzes the phosphorolysis of citrulline, the reverse reaction of the biosynthetic one, yielding ornithine and carbamoyl phosphate which serve to generate ATP from ADP. The sequence is that of Ornithine carbamoyltransferase, catabolic (arcB) from Malacoplasma penetrans (strain HF-2) (Mycoplasma penetrans).